The sequence spans 139 residues: MTSESSTPTGSTRALPASITRSSSSTLSTRPSASTPASTGSLTPSTSTASLVVSPPPARSPVVSTRATATTRPRLAAERPGSATTPCPCGDTDKQLAPCLQEGAGFVIRNAAVRLYMRFGRVWFWHCMLGLWGVGNLIW.

Positions 1-12 (MTSESSTPTGST) are enriched in polar residues. The segment at 1-86 (MTSESSTPTG…AERPGSATTP (86 aa)) is disordered. 2 stretches are compositionally biased toward low complexity: residues 14–53 (ALPASITRSSSSTLSTRPSASTPASTGSLTPSTSTASLVV) and 60–74 (SPVVSTRATATTRPR). Ser-60 carries the phosphoserine modification.

As to expression, embryo.

Involved in drought, heat, cold, and/or salt tolerance. In Zea mays (Maize), this protein is Stress-related protein 1 (SRP1).